The chain runs to 489 residues: Rhamnulokinase (489 aa).

13–17 (ASSGR) is a binding site for ATP. An intrachain disulfide couples C68 to C222. Substrate is bound by residues G83 and 236–238 (HDT). D237 (proton acceptor) is an active-site residue. T259 contributes to the ATP binding site. N296 provides a ligand contact to substrate. Position 304 (Q304) interacts with ATP. The cysteines at positions 353 and 370 are disulfide-linked. G402 contacts ATP. Residues C413 and C417 are joined by a disulfide bond.

This sequence belongs to the rhamnulokinase family. As to quaternary structure, monomer. Requires Mg(2+) as cofactor.

It catalyses the reaction L-rhamnulose + ATP = L-rhamnulose 1-phosphate + ADP + H(+). The protein operates within carbohydrate degradation; L-rhamnose degradation; glycerone phosphate from L-rhamnose: step 2/3. In terms of biological role, involved in the catabolism of L-rhamnose (6-deoxy-L-mannose). Catalyzes the transfer of the gamma-phosphate group from ATP to the 1-hydroxyl group of L-rhamnulose to yield L-rhamnulose 1-phosphate. In Escherichia coli (strain SE11), this protein is Rhamnulokinase.